The chain runs to 373 residues: Probable tRNA sulfurtransferase (373 aa).

The THUMP domain occupies Asn-54–Ile-158. Residues Leu-176–Phe-177, Asn-201–Phe-202, Lys-256, Gly-278, and Gln-287 contribute to the ATP site.

It belongs to the ThiI family.

It localises to the cytoplasm. It catalyses the reaction [ThiI sulfur-carrier protein]-S-sulfanyl-L-cysteine + a uridine in tRNA + 2 reduced [2Fe-2S]-[ferredoxin] + ATP + H(+) = [ThiI sulfur-carrier protein]-L-cysteine + a 4-thiouridine in tRNA + 2 oxidized [2Fe-2S]-[ferredoxin] + AMP + diphosphate. The catalysed reaction is [ThiS sulfur-carrier protein]-C-terminal Gly-Gly-AMP + S-sulfanyl-L-cysteinyl-[cysteine desulfurase] + AH2 = [ThiS sulfur-carrier protein]-C-terminal-Gly-aminoethanethioate + L-cysteinyl-[cysteine desulfurase] + A + AMP + 2 H(+). Its pathway is cofactor biosynthesis; thiamine diphosphate biosynthesis. Catalyzes the ATP-dependent transfer of a sulfur to tRNA to produce 4-thiouridine in position 8 of tRNAs, which functions as a near-UV photosensor. Also catalyzes the transfer of sulfur to the sulfur carrier protein ThiS, forming ThiS-thiocarboxylate. This is a step in the synthesis of thiazole, in the thiamine biosynthesis pathway. The sulfur is donated as persulfide by IscS. This is Probable tRNA sulfurtransferase from Saccharolobus islandicus (strain M.16.4 / Kamchatka #3) (Sulfolobus islandicus).